The primary structure comprises 88 residues: MKFFLIFLVIFPIMGVLGKKNGYAVDSSGKVSECLLNNYCNNICTKVYYATSGYCCLLSCYCFGLDDDKAVLKIKDATKSYCDVQIIG.

Positions 1–18 (MKFFLIFLVIFPIMGVLG) are cleaved as a signal peptide. One can recognise an LCN-type CS-alpha/beta domain in the interval 20–83 (KNGYAVDSSG…IKDATKSYCD (64 aa)). Cystine bridges form between Cys-34-Cys-55, Cys-40-Cys-60, Cys-44-Cys-62, and Cys-56-Cys-82. An Isoleucine amide modification is found at Ile-87.

It belongs to the long (4 C-C) scorpion toxin superfamily. Sodium channel inhibitor family. Beta subfamily. Expressed by the venom gland.

The protein resides in the secreted. In terms of biological role, excitatory insect beta-toxins induce a spastic paralysis. They bind voltage-independently at site-4 of sodium channels (Nav) and shift the voltage of activation toward more negative potentials thereby affecting sodium channel activation and promoting spontaneous and repetitive firing. This toxin is active only on insects. The polypeptide is Beta-insect excitatory toxin BmKIT1 (Olivierus martensii (Manchurian scorpion)).